A 718-amino-acid chain; its full sequence is 1-deoxy-D-xylulose-5-phosphate synthase 1, chloroplastic (718 aa).

The transit peptide at 1–55 (MAFCALSFPAHISRATTPAPSDLQKSSSFSSRFYWGADLLRPSQYKVRKIQSGVY) directs the protein to the chloroplast. Thiamine diphosphate is bound by residues H143 and 184-186 (GHS). D215 contributes to the Mg(2+) binding site. Residues 216 to 217 (GA), N244, Y365, and E447 contribute to the thiamine diphosphate site. N244 is a Mg(2+) binding site.

It belongs to the transketolase family. DXPS subfamily. As to quaternary structure, homodimer. Mg(2+) serves as cofactor. The cofactor is thiamine diphosphate. As to expression, expressed in trichomes, leaves, flowers, roots and stems.

The protein localises to the plastid. Its subcellular location is the chloroplast. It carries out the reaction D-glyceraldehyde 3-phosphate + pyruvate + H(+) = 1-deoxy-D-xylulose 5-phosphate + CO2. Its pathway is metabolic intermediate biosynthesis; 1-deoxy-D-xylulose 5-phosphate biosynthesis; 1-deoxy-D-xylulose 5-phosphate from D-glyceraldehyde 3-phosphate and pyruvate: step 1/1. In terms of biological role, catalyzes the acyloin condensation reaction between C atoms 2 and 3 of pyruvate and glyceraldehyde 3-phosphate to yield 1-deoxy-D-xylulose-5-phosphate (DXP). The polypeptide is 1-deoxy-D-xylulose-5-phosphate synthase 1, chloroplastic (Cannabis sativa (Hemp)).